The primary structure comprises 153 residues: 6,7-dimethyl-8-ribityllumazine synthase (153 aa).

5-amino-6-(D-ribitylamino)uracil is bound by residues F22, 56–58 (AFE), and 80–82 (AVI). 85–86 (ST) contacts (2S)-2-hydroxy-3-oxobutyl phosphate. Catalysis depends on H88, which acts as the Proton donor. 5-amino-6-(D-ribitylamino)uracil is bound at residue F113. Residue R127 coordinates (2S)-2-hydroxy-3-oxobutyl phosphate.

It belongs to the DMRL synthase family.

It carries out the reaction (2S)-2-hydroxy-3-oxobutyl phosphate + 5-amino-6-(D-ribitylamino)uracil = 6,7-dimethyl-8-(1-D-ribityl)lumazine + phosphate + 2 H2O + H(+). It participates in cofactor biosynthesis; riboflavin biosynthesis; riboflavin from 2-hydroxy-3-oxobutyl phosphate and 5-amino-6-(D-ribitylamino)uracil: step 1/2. Its function is as follows. Catalyzes the formation of 6,7-dimethyl-8-ribityllumazine by condensation of 5-amino-6-(D-ribitylamino)uracil with 3,4-dihydroxy-2-butanone 4-phosphate. This is the penultimate step in the biosynthesis of riboflavin. In Fusobacterium nucleatum subsp. nucleatum (strain ATCC 25586 / DSM 15643 / BCRC 10681 / CIP 101130 / JCM 8532 / KCTC 2640 / LMG 13131 / VPI 4355), this protein is 6,7-dimethyl-8-ribityllumazine synthase.